The sequence spans 409 residues: Na(+)/H(+) antiporter NhaA 2 (409 aa).

The next 12 helical transmembrane spans lie at 10–30 (VAAGLLLLAAVVGLVVANTPA), 60–80 (GLLVVFFFIVAVELKHEFLAG), 89–109 (LVPAIAAVGGVVVPALVYLAI), 118–138 (GWPVPTATDIAFALGVLAVFG), 148–168 (FLLALAVLDDLIAIGIIAVFF), 171–191 (GLDLGALAIAVAGVVLFAVVG), 203–223 (IAVVALLVLVALVTWWATLSS), 224–244 (GIHATIAGVALGFALPRLSGL), 257–277 (IVLPLFAFSAALVAIPAIGLA), 283–303 (FWGIALALPLGKLVGITAGGL), 328–348 (LLGGIGFTVSLLMSELAFAGL), and 356–376 (TLAVLLGSGVAIVAAAVTLSI). The tract at residues 384–409 (AGAAADDDDATRDDFPAHADGGPARA) is disordered.

It belongs to the NhaA Na(+)/H(+) (TC 2.A.33) antiporter family.

The protein resides in the cell membrane. The catalysed reaction is Na(+)(in) + 2 H(+)(out) = Na(+)(out) + 2 H(+)(in). Functionally, na(+)/H(+) antiporter that extrudes sodium in exchange for external protons. This Clavibacter michiganensis subsp. michiganensis (strain NCPPB 382) protein is Na(+)/H(+) antiporter NhaA 2.